Here is a 503-residue protein sequence, read N- to C-terminus: Guanosine-5'-triphosphate,3'-diphosphate pyrophosphatase (503 aa).

Belongs to the GppA/Ppx family. GppA subfamily.

It carries out the reaction guanosine 3'-diphosphate 5'-triphosphate + H2O = guanosine 3',5'-bis(diphosphate) + phosphate + H(+). It functions in the pathway purine metabolism; ppGpp biosynthesis; ppGpp from GTP: step 2/2. Catalyzes the conversion of pppGpp to ppGpp. Guanosine pentaphosphate (pppGpp) is a cytoplasmic signaling molecule which together with ppGpp controls the 'stringent response', an adaptive process that allows bacteria to respond to amino acid starvation, resulting in the coordinated regulation of numerous cellular activities. The chain is Guanosine-5'-triphosphate,3'-diphosphate pyrophosphatase from Pseudoalteromonas atlantica (strain T6c / ATCC BAA-1087).